A 282-amino-acid polypeptide reads, in one-letter code: Orotidine 5'-phosphate decarboxylase (282 aa).

Lys-95 (proton donor) is an active-site residue.

Belongs to the OMP decarboxylase family. Type 2 subfamily.

The catalysed reaction is orotidine 5'-phosphate + H(+) = UMP + CO2. The protein operates within pyrimidine metabolism; UMP biosynthesis via de novo pathway; UMP from orotate: step 2/2. The sequence is that of Orotidine 5'-phosphate decarboxylase from Polaromonas naphthalenivorans (strain CJ2).